We begin with the raw amino-acid sequence, 416 residues long: Tryptophan synthase beta chain (416 aa).

The segment at 1–23 is disordered; sequence MTSTLPSQPKDMELANSSRPSVH. K109 carries the N6-(pyridoxal phosphate)lysine modification.

It belongs to the TrpB family. In terms of assembly, tetramer of two alpha and two beta chains. Pyridoxal 5'-phosphate is required as a cofactor.

It catalyses the reaction (1S,2R)-1-C-(indol-3-yl)glycerol 3-phosphate + L-serine = D-glyceraldehyde 3-phosphate + L-tryptophan + H2O. It functions in the pathway amino-acid biosynthesis; L-tryptophan biosynthesis; L-tryptophan from chorismate: step 5/5. In terms of biological role, the beta subunit is responsible for the synthesis of L-tryptophan from indole and L-serine. The sequence is that of Tryptophan synthase beta chain from Prochlorococcus marinus (strain MIT 9211).